The primary structure comprises 396 residues: Ribosomal RNA large subunit methyltransferase I (396 aa).

The PUA domain occupies 2–81 (SVRLVLAKGR…ESIDIAFFTR (80 aa)).

It belongs to the methyltransferase superfamily. RlmI family.

It is found in the cytoplasm. The enzyme catalyses cytidine(1962) in 23S rRNA + S-adenosyl-L-methionine = 5-methylcytidine(1962) in 23S rRNA + S-adenosyl-L-homocysteine + H(+). Functionally, specifically methylates the cytosine at position 1962 (m5C1962) of 23S rRNA. The protein is Ribosomal RNA large subunit methyltransferase I of Escherichia coli (strain SMS-3-5 / SECEC).